We begin with the raw amino-acid sequence, 305 residues long: Tetraspanin-12 (305 aa).

At Met1 to Cys12 the chain is on the cytoplasmic side. 2 S-palmitoyl cysteine lipidation sites follow: Cys9 and Cys12. Residues Leu13–Ala33 traverse the membrane as a helical segment. Residues Trp34–Tyr59 are Extracellular-facing. Residues Phe60–Leu80 form a helical membrane-spanning segment. Over Gly81–Asn89 the chain is Cytoplasmic. Cys83 carries the S-palmitoyl cysteine lipid modification. Residues Leu90–Cys110 form a helical membrane-spanning segment. The Extracellular portion of the chain corresponds to Gly111 to Arg224. The helical transmembrane segment at Phe225–Leu245 threads the bilayer. The Cytoplasmic segment spans residues Trp246–Leu305.

This sequence belongs to the tetraspanin (TM4SF) family. As to quaternary structure, interacts (when palmitoylated) with ADAM10. Interacts with MMP14/MT1-MMP. Component of a complex, at least composed of TSPAN12, FZD4 and norrin (NDP). In terms of processing, palmitoylated; required for interaction with ADAM10. Expressed in the neonatal retinal vasculature but not other retinal tissues. Also detected in the neonatal meningeal vasculature and in nonvascular cell types, such as the smooth muscle cells in the neonatal intestine.

Its subcellular location is the cell membrane. In terms of biological role, regulator of cell surface receptor signal transduction. Acts as a regulator of membrane proteinases such as ADAM10 and MMP14/MT1-MMP. Activates ADAM10-dependent cleavage activity of amyloid precursor protein (APP). Activates MMP14/MT1-MMP-dependent cleavage activity. Plays a central role in retinal vascularization by regulating norrin (NDP) signal transduction. Acts in concert with norrin (NDP) to promote FZD4 multimerization and subsequent activation of FZD4, leading to promote accumulation of beta-catenin (CTNNB1) and stimulate LEF/TCF-mediated transcriptional programs. Suprisingly, it only activate the norrin (NDP)-dependent activation of FZD4, while it does not activate the Wnt-dependent activation of FZD4, suggesting the existence of a Wnt-independent signaling that also promote accumulation the beta-catenin (CTNNB1). The chain is Tetraspanin-12 (Tspan12) from Mus musculus (Mouse).